Reading from the N-terminus, the 310-residue chain is MATENASVPEFILAGLTDQPGLRMPLFFLFLGFYMVTMVGNLGLITLIGLNSHLHTPMYFFLFNLSLIDFCYSTVITPKMLVSFVSKKNIISYSGCMTQLFFFLFFVVSESFILSAMAYDRYVAICNPLMYTVTMSPQVCLLLLLGVYVMGFAGAMAHTAFMVKLTFCADKLVNHYMCDILPLLERSCTSTYVNELVVFIVVGIDIGVPTVTIFISYALILSSILRISSTEGRSKAFSTCSSHIIAVSLFFGSGAFMYLKPSSLLPMNQGKVSSLFYTIVVPMLNPLIYSLRNKDVKVALRKTLSRSSFS.

Over 1 to 27 (MATENASVPEFILAGLTDQPGLRMPLF) the chain is Extracellular. Asparagine 5 carries N-linked (GlcNAc...) asparagine glycosylation. A helical membrane pass occupies residues 28–48 (FLFLGFYMVTMVGNLGLITLI). The Cytoplasmic portion of the chain corresponds to 49-55 (GLNSHLH). Residues 56–76 (TPMYFFLFNLSLIDFCYSTVI) traverse the membrane as a helical segment. Residues 77–98 (TPKMLVSFVSKKNIISYSGCMT) are Extracellular-facing. A disulfide bridge connects residues cysteine 96 and cysteine 188. A helical membrane pass occupies residues 99–119 (QLFFFLFFVVSESFILSAMAY). Over 120 to 140 (DRYVAICNPLMYTVTMSPQVC) the chain is Cytoplasmic. Residues 141 to 161 (LLLLLGVYVMGFAGAMAHTAF) form a helical membrane-spanning segment. At 162–195 (MVKLTFCADKLVNHYMCDILPLLERSCTSTYVNE) the chain is on the extracellular side. A helical transmembrane segment spans residues 196-216 (LVVFIVVGIDIGVPTVTIFIS). The Cytoplasmic portion of the chain corresponds to 217–238 (YALILSSILRISSTEGRSKAFS). Residues 239–259 (TCSSHIIAVSLFFGSGAFMYL) form a helical membrane-spanning segment. Topologically, residues 260–270 (KPSSLLPMNQG) are extracellular. A helical membrane pass occupies residues 271–291 (KVSSLFYTIVVPMLNPLIYSL). The Cytoplasmic portion of the chain corresponds to 292-310 (RNKDVKVALRKTLSRSSFS).

This sequence belongs to the G-protein coupled receptor 1 family.

The protein localises to the cell membrane. Its function is as follows. Odorant receptor. The sequence is that of Olfactory receptor 8B8 from Mus musculus (Mouse).